Here is a 432-residue protein sequence, read N- to C-terminus: Putative D-alanyl-D-alanine carboxypeptidase (432 aa).

Residues 7-25 form a helical; Signal-anchor membrane-spanning segment; the sequence is ATVLLTFSLSAFAVEYPVL.

This sequence belongs to the peptidase S12 family. YfeW subfamily.

The protein localises to the cell inner membrane. The enzyme catalyses Preferential cleavage: (Ac)2-L-Lys-D-Ala-|-D-Ala. Also transpeptidation of peptidyl-alanyl moieties that are N-acyl substituents of D-alanine.. The polypeptide is Putative D-alanyl-D-alanine carboxypeptidase (Salmonella choleraesuis (strain SC-B67)).